A 172-amino-acid polypeptide reads, in one-letter code: Adenine phosphoribosyltransferase (172 aa).

This sequence belongs to the purine/pyrimidine phosphoribosyltransferase family. In terms of assembly, homodimer.

The protein localises to the cytoplasm. The enzyme catalyses AMP + diphosphate = 5-phospho-alpha-D-ribose 1-diphosphate + adenine. Its pathway is purine metabolism; AMP biosynthesis via salvage pathway; AMP from adenine: step 1/1. Its function is as follows. Catalyzes a salvage reaction resulting in the formation of AMP, that is energically less costly than de novo synthesis. The polypeptide is Adenine phosphoribosyltransferase (Lactiplantibacillus plantarum (strain ATCC BAA-793 / NCIMB 8826 / WCFS1) (Lactobacillus plantarum)).